Here is a 350-residue protein sequence, read N- to C-terminus: Ion-translocating oxidoreductase complex subunit D (350 aa).

The next 4 membrane-spanning stretches (helical) occupy residues 37-57 (YFFGFGVLIQVMLAIVVALTA), 68-88 (AVLSTISDNSALLTAILIGVA), 89-109 (IPPIAPWWLVVIGTLFAIVLV), and 120-140 (IFNPAMAAYVMLLISFPVQMT). Threonine 185 bears the FMN phosphoryl threonine mark. 5 consecutive transmembrane segments (helical) span residues 212–232 (GYGVGWFWVNMAYLAGGLIML), 239–259 (WHISFAILGSLFVCSSFGYLL), 265–285 (VGPLLQLFSGATMIAAFFIAT), 291–311 (ATSVKGRLLFGTLIGVMVYVI), and 315–335 (GGYPDAFAFAVLLANLCAPFI).

The protein belongs to the NqrB/RnfD family. In terms of assembly, the complex is composed of six subunits: RnfA, RnfB, RnfC, RnfD, RnfE and RnfG. The cofactor is FMN.

It is found in the cell inner membrane. In terms of biological role, part of a membrane-bound complex that couples electron transfer with translocation of ions across the membrane. In Shewanella pealeana (strain ATCC 700345 / ANG-SQ1), this protein is Ion-translocating oxidoreductase complex subunit D.